Consider the following 725-residue polypeptide: DNA replication licensing factor MCM7 (725 aa).

One can recognise an MCM domain in the interval 333-538; that stretch reads IYNKLARSLA…METDLEMARH (206 aa). 383–390 provides a ligand contact to ATP; it reads GDPGVAKS. The short motif at 515–518 is the Arginine finger element; sequence SRFD.

This sequence belongs to the MCM family. Component of the minichromosome maintenance (MCM) complex, a heterotetramer composed of MCM2, MCM3, MCM4, MCM5, MCM6 and MCM7.

It is found in the nucleus. It carries out the reaction ATP + H2O = ADP + phosphate + H(+). Its function is as follows. Probable component of the MCM2-7 complex (MCM complex) that may function as a DNA helicase and which is essential to undergo a single round of replication initiation and elongation per cell cycle in eukaryotic cells. The protein is DNA replication licensing factor MCM7 (MCM7) of Oryza sativa subsp. indica (Rice).